A 501-amino-acid polypeptide reads, in one-letter code: Ammonium transporter 1 member 1 (501 aa).

10 consecutive transmembrane segments (helical) span residues 8–28 (LAVL…GQLG), 46–66 (LLFS…LCAG), 81–101 (VLDA…FAFG), 128–148 (FLYQ…SIAE), 152–172 (FVAY…VVSH), 199–219 (FAGS…GALI), 243–263 (LVVL…PGSF), 333–353 (VVEP…LLGC), 366–386 (LEAA…TALF), and 419–439 (LIQI…LFFI). The residue at position 460 (threonine 460) is a Phosphothreonine. 4 positions are modified to phosphoserine: serine 475, serine 488, serine 490, and serine 492.

Belongs to the ammonia transporter channel (TC 1.A.11.2) family. In terms of assembly, self interacts. Interacts with the receptor protein kinases CEPR2, At2g28990 and PAM74. As to expression, highly expressed in roots. Expressed in root tips, root hairs, root epidermis, rhizodermis, cortex and pericycle. Expressed in leaves epidermal and mesophyll cells.

The protein localises to the cell membrane. Its function is as follows. High affinity ammonium transporter probably involved in ammonium uptake from the soil, long-distance transport to the shoots and re-uptake of apoplastic ammonium that derives from photorespiration in shoots. Contributes with AMT1-3 to the overall ammonium uptake capacity in roots under nitrogen-deficiency conditions. The sequence is that of Ammonium transporter 1 member 1 (AMT1-1) from Arabidopsis thaliana (Mouse-ear cress).